A 60-amino-acid polypeptide reads, in one-letter code: Large ribosomal subunit protein bL32 (60 aa).

Residues 1–44 (MAVQQNKKSRSARDMRRSHDALEASTLSVEKTTGEVHLRHHVSP) are disordered. Residues 11-22 (SARDMRRSHDAL) show a composition bias toward basic and acidic residues.

The protein belongs to the bacterial ribosomal protein bL32 family.

This is Large ribosomal subunit protein bL32 from Pseudomonas fluorescens (strain SBW25).